The chain runs to 1021 residues: Solute carrier family 12 member 3 (1021 aa).

Topologically, residues 1–137 (MAELPTTETP…KNPEEPVRFG (137 aa)) are cytoplasmic. Phosphoserine is present on S43. Residue T46 is modified to Phosphothreonine; by OXSR1 and STK39. S49 bears the Phosphoserine mark. Phosphothreonine is present on T50. Residues T55 and T60 each carry the phosphothreonine; by OXSR1 and STK39 modification. S73 is subject to Phosphoserine. Phosphoserine; by OXSR1 and STK39 is present on S91. A Phosphothreonine modification is found at T124. Phosphoserine is present on S126. Residues 138–167 (WVKGVMIRCMLNIWGVILYLRLPWITAQAG) traverse the membrane as a discontinuously helical segment. A Na(+)-binding site is contributed by L148. N149 contributes to the polythiazide binding site. Position 151 (W151) interacts with Na(+). Residues 168-189 (IVLTWIIILLSVTVTSITGLSI) traverse the membrane as a helical segment. The Cytoplasmic portion of the chain corresponds to 190-220 (SAISTNGKVKSGGTYFLISRSLGPELGGSIG). The chain crosses the membrane as a helical span at residues 221-243 (LIFAFANAVGVAMHTVGFAETVR). N227 and H234 together coordinate polythiazide. Topologically, residues 244–255 (DLLQEYGAPIVD) are extracellular. A run of 2 helical transmembrane segments spans residues 256–280 (PINDIRIIAVVSVTVLLAISLAGME) and 281–303 (WESKAQVLFFLVIMVSFANYLVG). The Extracellular segment spans residues 304–338 (TLIPPSEDKASKGFFSYRADIFVQNLVPDWRGPDG). A discontinuously helical membrane pass occupies residues 339 to 360 (TFFGMFSIFFPSATGILAGANI). T352 lines the polythiazide pocket. 3 residues coordinate chloride: G353, I354, and L355. N359 is a polythiazide binding site. Over 361-371 (SGDLKDPAIAI) the chain is Cytoplasmic. A helical transmembrane segment spans residues 372-393 (PKGTLMAIFWTTISYLAISATI). Residues 394–453 (GSCVVRDASGVLNDTVTPGWGACEGLACSYGWNFTECTQQHSCHYGLINYYQTMSMVSGF) are Extracellular-facing. N406 carries an N-linked (GlcNAc...) asparagine glycan. An intrachain disulfide couples C416 to C421. N426 carries N-linked (GlcNAc...) asparagine glycosylation. C430 and C436 are joined by a disulfide. A helical membrane pass occupies residues 454–477 (APLITAGIFGATLSSALACLVSAA). Na(+) contacts are provided by A464, S467, and S468. The Cytoplasmic segment spans residues 478 to 507 (KVFQCLCEDQLYPLIGFFGKGYGKNKEPVR). The chain crosses the membrane as a helical span at residues 508-522 (GYLLAYAIAVAFIII). Topologically, residues 523–527 (AELNT) are extracellular. The helical transmembrane segment at 528 to 544 (IAPIISNFFLCSYALIN) threads the bilayer. Y540 is a binding site for chloride. Over 545-567 (FSCFHASITNSPGWRPSFQYYNK) the chain is Cytoplasmic. 2 helical membrane passes run 568-587 (WAALFGAIISVVIMFLLTWW) and 588-599 (AALIAIGVVLFL). Topologically, residues 600-1021 (LLYVIYKKPE…QENVLTFYCQ (422 aa)) are cytoplasmic. Positions 615–630 (SVQAGSYNLALSYSVG) are scissor helix. Residues L648, R655, V677, G741, L780, and N781 each contribute to the ATP site.

Belongs to the SLC12A transporter family. Homodimer; adopts a domain-swap conformation at the scissor helices connecting the transmembrane domain and C-terminal domain. Interacts with KLHL3. Interacts with IL18R1; this interaction is increased by IL18 treatment. In terms of processing, ubiquitinated; ubiquitination is essential for regulation of endocytosis. The BCR(KLHL3) complex was initially identified as a candidate ubiquitin ligase for SLC12A3. However, it was later shown that it is not the case. Phosphorylated at Thr-46, Thr-55, Thr-60 and Ser-91 by OXSR1/OSR1 and STK39/SPAK downstream of WNK4, promoting its activity. Phosphorylated in response to IL18. Predominantly expressed in the kidney (at protein level). Localizes to the distal convoluted tubules (at protein level). Not detected in normal aorta, but abundantly expressed in fatty streaks and advanced atherosclerotic lesions (at protein level).

Its subcellular location is the cell membrane. It localises to the apical cell membrane. The catalysed reaction is chloride(out) + Na(+)(out) = chloride(in) + Na(+)(in). Its activity is regulated as follows. Phosphorylation by OXSR1/OSR1 and STK39/SPAK in kidney distal convoluted tubules downstream of WNK4 promotes its activity. Also activated by OXSR1/OSR1 and STK39/SPAK downstream of WNK3. Target of thiazide diuretics used in the treatment of high blood pressure. Thiazide drugs, such as polythiazide, specifically inhibit SLC12A3/NCC transporter activity by competing with chloride for binding and by locking SLC12A3/NCC in an outward-facing conformation. In terms of biological role, electroneutral sodium and chloride ion cotransporter, which acts as a key mediator of sodium and chloride reabsorption in kidney distal convoluted tubules. Also acts as a receptor for the pro-inflammatory cytokine IL18, thereby contributing to IL18-induced cytokine production, including IFNG, IL6, IL18 and CCL2. May act either independently of IL18R1, or in a complex with IL18R1. The polypeptide is Solute carrier family 12 member 3 (Homo sapiens (Human)).